Here is a 118-residue protein sequence, read N- to C-terminus: Holo-[acyl-carrier-protein] synthase (118 aa).

Mg(2+) is bound by residues aspartate 5 and glutamate 50.

The protein belongs to the P-Pant transferase superfamily. AcpS family. Mg(2+) is required as a cofactor.

Its subcellular location is the cytoplasm. It catalyses the reaction apo-[ACP] + CoA = holo-[ACP] + adenosine 3',5'-bisphosphate + H(+). Functionally, transfers the 4'-phosphopantetheine moiety from coenzyme A to a Ser of acyl-carrier-protein. The chain is Holo-[acyl-carrier-protein] synthase from Wolinella succinogenes (strain ATCC 29543 / DSM 1740 / CCUG 13145 / JCM 31913 / LMG 7466 / NCTC 11488 / FDC 602W) (Vibrio succinogenes).